A 293-amino-acid polypeptide reads, in one-letter code: 4-diphosphocytidyl-2-C-methyl-D-erythritol kinase (293 aa).

K16 is a catalytic residue. 99 to 109 (PMGAGLGGGSS) lines the ATP pocket. D141 is an active-site residue.

The protein belongs to the GHMP kinase family. IspE subfamily.

It catalyses the reaction 4-CDP-2-C-methyl-D-erythritol + ATP = 4-CDP-2-C-methyl-D-erythritol 2-phosphate + ADP + H(+). Its pathway is isoprenoid biosynthesis; isopentenyl diphosphate biosynthesis via DXP pathway; isopentenyl diphosphate from 1-deoxy-D-xylulose 5-phosphate: step 3/6. Catalyzes the phosphorylation of the position 2 hydroxy group of 4-diphosphocytidyl-2C-methyl-D-erythritol. This is 4-diphosphocytidyl-2-C-methyl-D-erythritol kinase from Burkholderia orbicola (strain MC0-3).